A 285-amino-acid polypeptide reads, in one-letter code: MTLSKAKAFWQLTRMNRPIGSLLLLWPTLWALFLAADGIPDWHVLIVFILGVVFMRSAGCVINDFADRKVDGHVKRTANRPLPSGLVSSKEALILFSVLVTCSFILVLTMNTLTIMLSSIGVLLAIAYPFMKRITYLPQFVLGLAFSWAIPMAYAAESNQVPPEAWLLFVINAVWTIAYDTQYAMVDRDDDLNIGIKSTAILFGRFDKLMIGLLQLTVLTLLIALGIQLSLPSLYNWGVLAAAGCFVYQQWLIKGREREACFEAFLNNNYVGGFIFVAISASVLI.

7 helical membrane passes run 33–53 (FLAADGIPDWHVLIVFILGVV), 93–113 (LILFSVLVTCSFILVLTMNTL), 134–154 (ITYLPQFVLGLAFSWAIPMAY), 166–186 (WLLFVINAVWTIAYDTQYAMV), 209–229 (LMIGLLQLTVLTLLIALGIQL), 233–253 (SLYNWGVLAAAGCFVYQQWLI), and 265–285 (FLNNNYVGGFIFVAISASVLI).

It belongs to the UbiA prenyltransferase family. It depends on Mg(2+) as a cofactor.

It localises to the cell inner membrane. The enzyme catalyses all-trans-octaprenyl diphosphate + 4-hydroxybenzoate = 4-hydroxy-3-(all-trans-octaprenyl)benzoate + diphosphate. It participates in cofactor biosynthesis; ubiquinone biosynthesis. In terms of biological role, catalyzes the prenylation of para-hydroxybenzoate (PHB) with an all-trans polyprenyl group. Mediates the second step in the final reaction sequence of ubiquinone-8 (UQ-8) biosynthesis, which is the condensation of the polyisoprenoid side chain with PHB, generating the first membrane-bound Q intermediate 3-octaprenyl-4-hydroxybenzoate. The polypeptide is 4-hydroxybenzoate octaprenyltransferase (Aliivibrio salmonicida (strain LFI1238) (Vibrio salmonicida (strain LFI1238))).